Consider the following 472-residue polypeptide: 2-methylcitrate synthase, mitochondrial (472 aa).

A mitochondrion-targeting transit peptide spans 1–29; sequence MALNLTSSRRALGSLKPLTRAAFSGVRGY. 2 residues coordinate CoA: Arg-75 and Lys-193. His-271 contacts oxaloacetate. A CoA-binding site is contributed by Leu-306. His-307 is a catalytic residue. Residues Val-348, Gly-350, and Tyr-351 each coordinate CoA. Residues His-353 and Arg-362 each contribute to the oxaloacetate site. Residue His-353 is part of the active site. Thr-402, Lys-403, and Asn-408 together coordinate CoA. Asp-410 is an active-site residue. Arg-436 and Arg-456 together coordinate oxaloacetate.

The protein belongs to the citrate synthase family. In terms of assembly, homodimer.

The protein resides in the mitochondrion matrix. It carries out the reaction propanoyl-CoA + oxaloacetate + H2O = (2S,3S)-2-methylcitrate + CoA + H(+). The catalysed reaction is oxaloacetate + acetyl-CoA + H2O = citrate + CoA + H(+). The protein operates within organic acid metabolism; propanoate degradation. Its function is as follows. Component of the methylcitrate cycle that catalyzes the synthesis of (2S,3S)-2-methylcitrate from propionyl-CoA and oxaloacetate. Plays an important role in detoxification of propionyl-CoA, an inhibitor of both primary and secondary metabolism. Also has citrate synthase activity using as substrates acetyl-CoA and oxaloacetate. This Gibberella moniliformis (Maize ear and stalk rot fungus) protein is 2-methylcitrate synthase, mitochondrial.